Here is a 151-residue protein sequence, read N- to C-terminus: Ribonuclease H (151 aa).

An RNase H type-1 domain is found at 1–141 (MKHVDIFTDG…ADELARKGME (141 aa)). Mg(2+)-binding residues include Asp-9, Glu-47, Asp-69, and Asp-133.

Belongs to the RNase H family. As to quaternary structure, monomer. Mg(2+) is required as a cofactor.

The protein resides in the cytoplasm. The catalysed reaction is Endonucleolytic cleavage to 5'-phosphomonoester.. Endonuclease that specifically degrades the RNA of RNA-DNA hybrids. The polypeptide is Ribonuclease H (Rhizobium johnstonii (strain DSM 114642 / LMG 32736 / 3841) (Rhizobium leguminosarum bv. viciae)).